Consider the following 539-residue polypeptide: Phosphoenolpyruvate carboxykinase (ATP) (539 aa).

Residues Arg64, Tyr206, and Lys212 each coordinate substrate. ATP-binding positions include Lys212, His231, and 247–255 (GLSGTGKTT). Positions 212 and 231 each coordinate Mn(2+). Asp268 serves as a coordination point for Mn(2+). ATP-binding positions include Glu296, Arg332, 448-449 (RI), and Thr454. Arg332 contributes to the substrate binding site.

It belongs to the phosphoenolpyruvate carboxykinase (ATP) family. In terms of assembly, monomer. It depends on Mn(2+) as a cofactor.

The protein resides in the cytoplasm. It carries out the reaction oxaloacetate + ATP = phosphoenolpyruvate + ADP + CO2. The protein operates within carbohydrate biosynthesis; gluconeogenesis. In terms of biological role, involved in the gluconeogenesis. Catalyzes the conversion of oxaloacetate (OAA) to phosphoenolpyruvate (PEP) through direct phosphoryl transfer between the nucleoside triphosphate and OAA. The polypeptide is Phosphoenolpyruvate carboxykinase (ATP) (Salmonella gallinarum (strain 287/91 / NCTC 13346)).